The chain runs to 254 residues: Type III pantothenate kinase (254 aa).

6–13 (DVGNTNTV) provides a ligand contact to ATP. Substrate-binding positions include Y100 and 107–110 (GADR). The active-site Proton acceptor is D109. Position 129 (D129) interacts with K(+). T132 contacts ATP. Substrate is bound at residue T184.

This sequence belongs to the type III pantothenate kinase family. In terms of assembly, homodimer. The cofactor is NH4(+). Requires K(+) as cofactor.

It is found in the cytoplasm. The enzyme catalyses (R)-pantothenate + ATP = (R)-4'-phosphopantothenate + ADP + H(+). Its pathway is cofactor biosynthesis; coenzyme A biosynthesis; CoA from (R)-pantothenate: step 1/5. Functionally, catalyzes the phosphorylation of pantothenate (Pan), the first step in CoA biosynthesis. This chain is Type III pantothenate kinase, found in Halalkalibacterium halodurans (strain ATCC BAA-125 / DSM 18197 / FERM 7344 / JCM 9153 / C-125) (Bacillus halodurans).